The chain runs to 239 residues: 1-(5-phosphoribosyl)-5-[(5-phosphoribosylamino)methylideneamino] imidazole-4-carboxamide isomerase (239 aa).

Asp8 functions as the Proton acceptor in the catalytic mechanism. Asp129 serves as the catalytic Proton donor.

The protein belongs to the HisA/HisF family.

It is found in the cytoplasm. The enzyme catalyses 1-(5-phospho-beta-D-ribosyl)-5-[(5-phospho-beta-D-ribosylamino)methylideneamino]imidazole-4-carboxamide = 5-[(5-phospho-1-deoxy-D-ribulos-1-ylimino)methylamino]-1-(5-phospho-beta-D-ribosyl)imidazole-4-carboxamide. Its pathway is amino-acid biosynthesis; L-histidine biosynthesis; L-histidine from 5-phospho-alpha-D-ribose 1-diphosphate: step 4/9. The chain is 1-(5-phosphoribosyl)-5-[(5-phosphoribosylamino)methylideneamino] imidazole-4-carboxamide isomerase from Bacillus cereus (strain G9842).